The sequence spans 512 residues: Glucose-1-phosphate adenylyltransferase small subunit 2, chloroplastic (512 aa).

A disordered region spans residues 1-21 (MAAIGVLKVPPSSSSSSSSSS). The transit peptide at 1–63 (MAAIGVLKVP…RNPFIVSPKA (63 aa)) directs the protein to the chloroplast. Over residues 12–21 (SSSSSSSSSS) the composition is skewed to low complexity.

The protein belongs to the bacterial/plant glucose-1-phosphate adenylyltransferase family. As to quaternary structure, heterotetramer. As to expression, leaves and seeds.

Its subcellular location is the plastid. It is found in the chloroplast. It carries out the reaction alpha-D-glucose 1-phosphate + ATP + H(+) = ADP-alpha-D-glucose + diphosphate. It functions in the pathway glycan biosynthesis; starch biosynthesis. With respect to regulation, activated by 3'phosphoglycerate, inhibited by orthophosphate. Allosteric regulation. Its function is as follows. This protein plays a role in synthesis of starch. It catalyzes the synthesis of the activated glycosyl donor, ADP-glucose from Glc-1-P and ATP. This chain is Glucose-1-phosphate adenylyltransferase small subunit 2, chloroplastic (AGPP), found in Vicia faba (Broad bean).